We begin with the raw amino-acid sequence, 886 residues long: Linoleate 9S-lipoxygenase 5 (886 aa).

The 146-residue stretch at 35–180 (IEGEVVVMKK…RYRSDRVFFS (146 aa)) folds into the PLAT domain. The Lipoxygenase domain maps to 183–886 (AYLPSETPEL…GKGIPNSVSI (704 aa)). Positions 234–266 (GPDSVRPVLGGSPELPYPRRGKTGRKSTKSDPK) are disordered. Residues His-542, His-547, His-733, Asn-737, and Ile-886 each contribute to the Fe cation site.

Belongs to the lipoxygenase family. Fe cation is required as a cofactor. As to expression, expressed in roots.

It carries out the reaction (9Z,12Z)-octadecadienoate + O2 = (9S)-hydroperoxy-(10E,12Z)-octadecadienoate. It catalyses the reaction (9Z,12Z,15Z)-octadecatrienoate + O2 = (9S)-hydroperoxy-(10E,12Z,15Z)-octadecatrienoate. It participates in lipid metabolism; oxylipin biosynthesis. In terms of biological role, 9S-lipoxygenase that can use linoleic acid or linolenic acid as substrates. Plant lipoxygenases may be involved in a number of diverse aspects of plant physiology including growth and development, pest resistance, and senescence or responses to wounding. Catalyzes the hydroperoxidation of lipids containing a cis,cis-1,4-pentadiene structure. Function as regulators of root development by controlling the emergence of lateral roots. 9S-lypoxygenase-derived oxylipins may play an antagonistic role to ethylene signaling in the control of responses involving oxidative stress, lipid peroxidation and plant defense. LOX5-derived oxylipins may facilitate performance of green peach aphid (Myzus persicae) on foliage. 9S-lypoxygenase-derived oxylipins are engaged during infection to control the balance between salicylic acid (SA) and jasmonate (JA) signaling to facilitate infection by the fungal pathogen Fusarium graminearum. 9S-lypoxygenase-derived oxylipins activate brassinosteroid signaling to promote cell wall-based defense and limit pathogen infection. Does not seem to contribute to the oxidation of free fatty acids during seed aging. This chain is Linoleate 9S-lipoxygenase 5, found in Arabidopsis thaliana (Mouse-ear cress).